A 381-amino-acid chain; its full sequence is Cytochrome P450 105C1 (381 aa).

Heme is bound at residue cysteine 330.

This sequence belongs to the cytochrome P450 family. The cofactor is heme.

It is found in the cytoplasm. This Streptomyces sp protein is Cytochrome P450 105C1 (cyp105C1).